Reading from the N-terminus, the 97-residue chain is Putative membrane protein insertion efficiency factor (97 aa).

The protein belongs to the UPF0161 family.

The protein resides in the cell membrane. Functionally, could be involved in insertion of integral membrane proteins into the membrane. In Lactobacillus gasseri (strain ATCC 33323 / DSM 20243 / BCRC 14619 / CIP 102991 / JCM 1131 / KCTC 3163 / NCIMB 11718 / NCTC 13722 / AM63), this protein is Putative membrane protein insertion efficiency factor.